A 275-amino-acid chain; its full sequence is Large ribosomal subunit protein uL2 (275 aa).

A disordered region spans residues 223–275; sequence VAMNPVDHPHGGGEGRTSGGRHPVSPWGQPTKGYKTRSNKRTDKYIVRRRNKK.

It belongs to the universal ribosomal protein uL2 family. Part of the 50S ribosomal subunit. Forms a bridge to the 30S subunit in the 70S ribosome.

In terms of biological role, one of the primary rRNA binding proteins. Required for association of the 30S and 50S subunits to form the 70S ribosome, for tRNA binding and peptide bond formation. It has been suggested to have peptidyltransferase activity; this is somewhat controversial. Makes several contacts with the 16S rRNA in the 70S ribosome. The sequence is that of Large ribosomal subunit protein uL2 from Shewanella piezotolerans (strain WP3 / JCM 13877).